The primary structure comprises 267 residues: MKEILIIIILGIVEGITEFFPISSNGHLILINYIFNIDKENIQNIIKIIQIGPIFSIILLFKEKIKKSITFFYFNINNIKKKLILILFNLVLSCIPISILGFMFYKKLEEFYSPKYISYFLILGSIFFILSEFISLKKIKIDNFKKISFLKYFIIGSSQCFSLLPGVSRLGITISIGLILNIDRYVLFKFSMILFSSIMPAVLILEVYKNFFYLKENIFFVIIGVMSSFLTSLIFGRTAIKIMKNTSLIIFAIYRIFIACIILFTCN.

The next 8 helical transmembrane spans lie at 4–24, 41–61, 84–104, 116–136, 160–180, 185–205, 216–236, and 246–266; these read ILII…PISS, NIQN…ILLF, ILIL…GFMF, YISY…FISL, CFSL…GLIL, YVLF…VLIL, ENIF…LIFG, and TSLI…LFTC.

The protein belongs to the UppP family.

It is found in the cell membrane. It carries out the reaction di-trans,octa-cis-undecaprenyl diphosphate + H2O = di-trans,octa-cis-undecaprenyl phosphate + phosphate + H(+). Catalyzes the dephosphorylation of undecaprenyl diphosphate (UPP). Confers resistance to bacitracin. This chain is Undecaprenyl-diphosphatase, found in Wigglesworthia glossinidia brevipalpis.